A 465-amino-acid chain; its full sequence is MSIYRISTTRKMPEVQKLNALLASYVRFISADSSLRDVLAAKIPAEQERVKNFRKQHGSFKMGETTVDMMYGGMRGIKALVTETSVLDADEGIRFRGLSIPECQKVLPAADGGEEPLPEGLFWLLLTGEVPSKAQVKQVSREWAARAALPQHVVTMLNNFPTSLHPMSQFSAAITALNHDSKFAKAYSDGVHKSKYWEHVYEDSMDLIAKLPVVAATIYCNTYRNGKGSKSIDSSLDWSANFVKMLGYDDPKFTELMRLYLTIHSDHEGGNVSAHTVHLVGSALSDPYLSFAAGMNGLAGPLHGLANQEVLVWLRKLQKEAGSNPSEEQLKEYIWKTLKSGQVVPGYGHAVLRKTDPRYTCQREFALKHLPNDELFQLVSKIYKVVPPILQETGKVKNPWPNVDAHSGVLLQYYGMKEMNYYTVLFGVSRALGVLASLVWDRALGLPIERPKSLSTDLLMKMVQK.

Residues His-303, His-349, and Asp-404 contribute to the active site.

It belongs to the citrate synthase family. In terms of assembly, homodimer.

It localises to the mitochondrion matrix. The catalysed reaction is oxaloacetate + acetyl-CoA + H2O = citrate + CoA + H(+). Its pathway is carbohydrate metabolism; tricarboxylic acid cycle; isocitrate from oxaloacetate: step 1/2. This chain is Probable citrate synthase, mitochondrial, found in Glossina morsitans morsitans (Savannah tsetse fly).